Consider the following 348-residue polypeptide: Protein-arginine N-acetylglucosaminyltransferase SseK2 (348 aa).

Residues 64-66 (QWF), Tyr-88, and 237-240 (YLDA) contribute to the UDP-N-acetyl-alpha-D-glucosamine site. The short motif at 239–241 (DAD) is the DXD motif element. Asp-241 is a Mn(2+) binding site. Glu-271 functions as the Proton acceptor in the catalytic mechanism. Residues Asn-338, Ser-340, and 345–348 (SSWR) each bind UDP-N-acetyl-alpha-D-glucosamine. The Mn(2+) site is built by Asn-338 and Ser-340.

This sequence belongs to the glycosyltransferase NleB family. Mn(2+) is required as a cofactor.

The protein resides in the secreted. Its subcellular location is the host Golgi apparatus. It catalyses the reaction L-arginyl-[protein] + UDP-N-acetyl-alpha-D-glucosamine = N(omega)-(N-acetyl-beta-D-glucosaminyl)-L-arginyl-[protein] + UDP + H(+). With respect to regulation, protein-arginine N-acetylglucosaminyltransferase activity is inhibited by 100066N compound (flavone analog) and 102644N compound (a substituted isoxazole). In terms of biological role, protein-arginine N-acetylglucosaminyltransferase effector that catalyzes the transfer of a single N-acetylglucosamine (GlcNAc) to a conserved arginine residue in the death domain of host proteins such as FADD: arginine GlcNAcylation prevents homotypic/heterotypic death domain interactions. Also acts on host proteins without a death domain: catalyzes arginine GlcNAcylation of host small Rab1 GTPase, thereby preventing GTPase activity and leading to impaired host vesicular protein transport. In contrast to Ssek1, not able to disrupt TNF signaling in infected cells. In Salmonella typhimurium (strain SL1344), this protein is Protein-arginine N-acetylglucosaminyltransferase SseK2.